Reading from the N-terminus, the 259-residue chain is uncharacterized protein (259 aa).

In terms of domain architecture, Radical SAM core spans 19-249 (TKIPGAKYVI…DEVINTIKKK (231 aa)). Positions 34, 38, and 41 each coordinate [4Fe-4S] cluster.

It depends on [4Fe-4S] cluster as a cofactor.

This is an uncharacterized protein from Methanocaldococcus jannaschii (strain ATCC 43067 / DSM 2661 / JAL-1 / JCM 10045 / NBRC 100440) (Methanococcus jannaschii).